The following is a 405-amino-acid chain: MGSSDSSSGSAQKAARHQHEPPPPRQRGSAPELPPGFRFHPTDEELVVHYLKKKAAKVPLPVTIIAEVDLYKFDPWELPEKATFGEQEWYFFSPRDRKYPNGARPNRAATSGYWKATGTDKPILASGTGCGLVREKLGVKKALVFYRGKPPKGLKTNWIMHEYRLTDVSGSTTTSRPPPPVTGGSRAAASLRLDDWVLCRIYKKINKAAAGDQQRSTECEDSVEDAVTAYPLYATAGMAGAGAHGSNYASPSLLHHQDSHFLEGLFTADDAGLSAGATSLSHLAAAARASPAPTKQFLAPSSSTPFNWLDASPAGILPQARNFPGFNRSRNVGNMSLSSTADMAGAAGNAVNAMSAFMNPLPVQDGTYHQHHVILGAPLAPEATTGGATSGFQHPVQVSGVNWNP.

Over residues 1–10 (MGSSDSSSGS) the composition is skewed to low complexity. The segment at 1 to 38 (MGSSDSSSGSAQKAARHQHEPPPPRQRGSAPELPPGFR) is disordered. The NAC domain occupies 33-204 (LPPGFRFHPT…DWVLCRIYKK (172 aa)). The DNA-binding element occupies 137–210 (LGVKKALVFY…IYKKINKAAA (74 aa)).

Expressed in flag leaves, green spikes and peduncles.

The protein resides in the nucleus. Functionally, transcription factor of the NAC family associated with the grain protein content (GPC). Accelerates senescence and increases nutrient remobilization from leaves to developing grains. The tetraploid cultivated wheat (T.durum) contains one additional gene coding for a functional protein (NAM-B2) and one extra pseudogene (NAM-B1). The chain is NAC transcription factor NAM-A1 (NAM-A1) from Triticum turgidum subsp. durum (Durum wheat).